The primary structure comprises 218 residues: Cytochrome b6 (218 aa).

The helical transmembrane segment at 35 to 55 (IFYCLGGITLVCFLIQFATGF) threads the bilayer. Heme c is bound at residue Cys38. Residues His89 and His103 each contribute to the heme b site. Transmembrane regions (helical) follow at residues 93 to 113 (ASMMVLMLILHVFRVYLTGGF), 119 to 139 (LTWVTGVVMAVITVAFGVTGY), and 189 to 209 (LHTFVLPWSLAVFMLMHFLMI). Residues His190 and His205 each coordinate heme b.

The protein belongs to the cytochrome b family. PetB subfamily. The 4 large subunits of the cytochrome b6-f complex are cytochrome b6, subunit IV (17 kDa polypeptide, PetD), cytochrome f and the Rieske protein, while the 4 small subunits are PetG, PetL, PetM and PetN. The complex functions as a dimer. It depends on heme b as a cofactor. The cofactor is heme c.

It is found in the cellular thylakoid membrane. Component of the cytochrome b6-f complex, which mediates electron transfer between photosystem II (PSII) and photosystem I (PSI), cyclic electron flow around PSI, and state transitions. The protein is Cytochrome b6 of Prochlorococcus marinus (strain MIT 9515).